Consider the following 850-residue polypeptide: Transcription initiation factor TFIID subunit 4B (850 aa).

The segment at 99 to 240 (GTTTIQLPAN…TPSNDARLKA (142 aa)) is sufficient for interaction with ZNF628. A TAFH domain is found at 256 to 353 (ENVKKCKNFL…VKEVSGDVVI (98 aa)). Positions 504-526 (PSTLLPQAAGIPQTAKVKQLVVQ) are required for interaction with P65/RELA. The Nuclear export signal signature appears at 509-549 (PQAAGIPQTAKVKQLVVQQPSGSSVNHVTSISHSSPLSTQN). Phosphoserine is present on Ser584. Positions 642 to 691 (PFLVIGALQKRILDIGKKHDITELNSDAVNLISHATQERLRGLLEKLTTI) constitute a Histone-fold domain. A disordered region spans residues 788–812 (KRPLESGNESFKDNPSTSGTSSLTA). Residues 794–812 (GNESFKDNPSTSGTSSLTA) show a composition bias toward polar residues. The interval 818–850 (PRITRICLRDLIFCMEQEREMKYSRALYLALLK) is required for interaction with TAF12.

It belongs to the TAF4 family. TFIID is composed of TATA binding protein (TBP) and a number of TBP-associated factors (TAFs). Heterodimerizes with TAF12/TFII20 via the C-terminal H2A-like histone-fold domain. This heterodimer forms a histone-like octamer with the TAF6/TAFII70-TAF9/TAFII31 heterodimer. Interacts with P65/RELA homodimers and P65/RELA-REL heterodimers. Interaction with POU2AF1, via its C-terminal activation domain, is required for octamer-dependent transcription. Interacts with ZNF628. In terms of tissue distribution, highly expressed in the testes and ovary, whereas lower levels are detected in most other tissues.

The protein localises to the nucleus. It localises to the cytoplasm. Cell type-specific subunit of the general transcription factor TFIID that may function as a gene-selective coactivator in certain cells. TFIID is a multimeric protein complex that plays a central role in mediating promoter responses to various activators asond repressors. TAF4B is a transcriptional coactivator of the p65/RELA NF-kappa-B subunit. Involved in the activation of a subset of antiapoptotic genes including TNFAIP3. Through interaction with OCBA/POU2AF1, acts as a coactivator of B-cell-specific transcription. Plays a role in spermiogenesis and oogenesis. In Mus musculus (Mouse), this protein is Transcription initiation factor TFIID subunit 4B (Taf4b).